The following is a 62-amino-acid chain: Short neurotoxin B (62 aa).

The segment covering 1–16 (RRCFNHPSSQPQTNKS) has biased composition (polar residues). The disordered stretch occupies residues 1 to 21 (RRCFNHPSSQPQTNKSCPPGE). Disulfide bonds link Cys-3-Cys-24, Cys-17-Cys-41, Cys-43-Cys-54, and Cys-55-Cys-60.

This sequence belongs to the three-finger toxin family. Short-chain subfamily. Type I alpha-neurotoxin sub-subfamily. As to expression, expressed by the venom gland.

Its subcellular location is the secreted. In terms of biological role, binds to muscle nicotinic acetylcholine receptor (nAChR) and inhibit acetylcholine from binding to the receptor, thereby impairing neuromuscular transmission. This is Short neurotoxin B from Laticauda crockeri (Crocker's sea snake).